Consider the following 160-residue polypeptide: 2-C-methyl-D-erythritol 2,4-cyclodiphosphate synthase (160 aa).

Aspartate 10 and histidine 12 together coordinate a divalent metal cation. Residues aspartate 10–histidine 12 and histidine 36–serine 37 each bind 4-CDP-2-C-methyl-D-erythritol 2-phosphate. Histidine 44 serves as a coordination point for a divalent metal cation. 4-CDP-2-C-methyl-D-erythritol 2-phosphate is bound by residues aspartate 58 to glycine 60, phenylalanine 63 to aspartate 67, and arginine 144.

This sequence belongs to the IspF family. In terms of assembly, homotrimer. The cofactor is a divalent metal cation.

The catalysed reaction is 4-CDP-2-C-methyl-D-erythritol 2-phosphate = 2-C-methyl-D-erythritol 2,4-cyclic diphosphate + CMP. The protein operates within isoprenoid biosynthesis; isopentenyl diphosphate biosynthesis via DXP pathway; isopentenyl diphosphate from 1-deoxy-D-xylulose 5-phosphate: step 4/6. In terms of biological role, involved in the biosynthesis of isopentenyl diphosphate (IPP) and dimethylallyl diphosphate (DMAPP), two major building blocks of isoprenoid compounds. Catalyzes the conversion of 4-diphosphocytidyl-2-C-methyl-D-erythritol 2-phosphate (CDP-ME2P) to 2-C-methyl-D-erythritol 2,4-cyclodiphosphate (ME-CPP) with a corresponding release of cytidine 5-monophosphate (CMP). The polypeptide is 2-C-methyl-D-erythritol 2,4-cyclodiphosphate synthase (Dechloromonas aromatica (strain RCB)).